We begin with the raw amino-acid sequence, 78 residues long: Putative antitoxin VapB4 (78 aa).

This sequence belongs to the UPF0330 family.

In terms of biological role, possibly the antitoxin component of a type II toxin-antitoxin (TA) system. Its cognate toxin is VapC4 (Potential). The chain is Putative antitoxin VapB4 (vapB4) from Pyrococcus furiosus (strain ATCC 43587 / DSM 3638 / JCM 8422 / Vc1).